A 184-amino-acid polypeptide reads, in one-letter code: Glutathione-regulated potassium-efflux system ancillary protein KefG (184 aa).

This sequence belongs to the NAD(P)H dehydrogenase (quinone) family. KefG subfamily. In terms of assembly, interacts with KefB.

The protein localises to the cell inner membrane. The catalysed reaction is a quinone + NADH + H(+) = a quinol + NAD(+). It catalyses the reaction a quinone + NADPH + H(+) = a quinol + NADP(+). Its function is as follows. Regulatory subunit of a potassium efflux system that confers protection against electrophiles. Required for full activity of KefB. The sequence is that of Glutathione-regulated potassium-efflux system ancillary protein KefG from Escherichia coli O1:K1 / APEC.